Consider the following 205-residue polypeptide: Leucyl/phenylalanyl-tRNA--protein transferase (205 aa).

This sequence belongs to the L/F-transferase family.

It localises to the cytoplasm. It catalyses the reaction N-terminal L-lysyl-[protein] + L-leucyl-tRNA(Leu) = N-terminal L-leucyl-L-lysyl-[protein] + tRNA(Leu) + H(+). It carries out the reaction N-terminal L-arginyl-[protein] + L-leucyl-tRNA(Leu) = N-terminal L-leucyl-L-arginyl-[protein] + tRNA(Leu) + H(+). The catalysed reaction is L-phenylalanyl-tRNA(Phe) + an N-terminal L-alpha-aminoacyl-[protein] = an N-terminal L-phenylalanyl-L-alpha-aminoacyl-[protein] + tRNA(Phe). Its function is as follows. Functions in the N-end rule pathway of protein degradation where it conjugates Leu, Phe and, less efficiently, Met from aminoacyl-tRNAs to the N-termini of proteins containing an N-terminal arginine or lysine. In Mesorhizobium japonicum (strain LMG 29417 / CECT 9101 / MAFF 303099) (Mesorhizobium loti (strain MAFF 303099)), this protein is Leucyl/phenylalanyl-tRNA--protein transferase.